We begin with the raw amino-acid sequence, 318 residues long: Isoflavone reductase (318 aa).

Residues 11–17, R36, and K44 each bind NADP(+); that span reads GPTGAIG. K144 serves as the catalytic Proton acceptor. An NADP(+)-binding site is contributed by R148.

This sequence belongs to the NmrA-type oxidoreductase family. Isoflavone reductase subfamily.

It catalyses the reaction (3R)-vestitone + NADP(+) = 2'-hydroxyformononetin + NADPH + 2 H(+). It functions in the pathway phytoalexin biosynthesis; pterocarpan phytoalexin biosynthesis. Functionally, reduces achiral isoflavones to chiral isoflavanones during the biosynthesis of chiral pterocarpan phytoalexins. The reduction product is a third isomer, which represents the penultimate intermediate in the synthesis of the phytoalexin (-)-medicarpin, the major phytoalexin in Alfalfa. The polypeptide is Isoflavone reductase (Medicago sativa (Alfalfa)).